Consider the following 889-residue polypeptide: Voltage-gated potassium channel KCNC3 (889 aa).

The segment at 1–80 (MLSSVCVWSF…CSGLPAVAMG (80 aa)) is important for normal N-type inactivation. Residues 1–291 (MLSSVCVWSF…EDPYSSRAAR (291 aa)) lie on the Cytoplasmic side of the membrane. The disordered stretch occupies residues 10-66 (FSGRQGTRKQHSQPAPTPQPPESSPPPLLPPPQQQCAQPGTAASPAGAPLSCGPGGR). Positions 24-42 (APTPQPPESSPPPLLPPPQ) are enriched in pro residues. Zn(2+)-binding residues include H159, C165, C186, and C187. Residues 202-231 (DSFEAPDSSGNANANAGGAHDAGLDDEAGA) are disordered. Positions 211-222 (GNANANAGGAHD) are enriched in low complexity. A helical transmembrane segment spans residues 292–310 (YVAFASLFFILISITTFCL). N-linked (GlcNAc...) asparagine glycosylation is present at N321. A helical transmembrane segment spans residues 352 to 371 (VEGVCVVWFTFEFLMRVTFC). Over 372-380 (PDKVEFLKS) the chain is Cytoplasmic. The chain crosses the membrane as a helical span at residues 381 to 399 (SLNIIDCVAILPFYLEVGL). The chain crosses the membrane as a helical; Voltage-sensor span at residues 413 to 435 (FLRVVRFVRILRIFKLTRHFVGL). Over 436 to 448 (RVLGHTLRASTNE) the chain is Cytoplasmic. A helical transmembrane segment spans residues 449-470 (FLLLIIFLALGVLIFATMIYYA). T504, L505, G506, and Y507 together coordinate K(+). The short motif at 504 to 509 (TLGYGD) is the Selectivity filter element. The helical transmembrane segment at 519–540 (LVGALCALAGVLTIAMPVPVIV) threads the bilayer. Residues 541–889 (NNFGMYYSLA…FPSRHSSPAV (349 aa)) are Cytoplasmic-facing. Disordered stretches follow at residues 557 to 627 (PKKK…LLRG), 691 to 834 (IDQP…PQSL), and 852 to 889 (TLGF…SPAV). The residue at position 626 (R626) is an Omega-N-methylarginine. Phosphoserine occurs at positions 697 and 702. Low complexity predominate over residues 748 to 764 (SQAPPASCPTSTPTQQP). T759 is subject to Phosphothreonine. The span at 794-808 (HRSHQPPGKHQRGGR) shows a compositional bias: basic residues.

The protein belongs to the potassium channel family. C (Shaw) (TC 1.A.1.2) subfamily. Kv3.3/KCNC3 sub-subfamily. As to quaternary structure, homotetramer. Heterotetramer with KCNC1. Interacts (via C-terminus) with HAX1; this interaction modulates channel gating. Identified in a complex with ACTR3, a subunit of the Arp2/3 complex; this interaction is indirect and depends on the presence of HAX1. In terms of processing, N-glycosylated. In terms of tissue distribution, detected on Purkinje cells in the cerebellum molecular layer (at protein level).

It is found in the cell membrane. The protein localises to the presynaptic cell membrane. The protein resides in the perikaryon. Its subcellular location is the cell projection. It localises to the axon. It is found in the dendrite. The protein localises to the dendritic spine membrane. The protein resides in the cytoplasm. Its subcellular location is the cell cortex. It localises to the cytoskeleton. It catalyses the reaction K(+)(in) = K(+)(out). Functionally, voltage-gated potassium channel that plays an important role in the rapid repolarization of fast-firing brain neurons. The channel opens in response to the voltage difference across the membrane, forming a potassium-selective channel through which potassium ions pass in accordance with their electrochemical gradient. The channel displays rapid activation and inactivation kinetics. It plays a role in the regulation of the frequency, shape and duration of action potentials in Purkinje cells. Required for normal survival of cerebellar neurons, probably via its role in regulating the duration and frequency of action potentials that in turn regulate the activity of voltage-gated Ca(2+) channels and cellular Ca(2+) homeostasis. Required for normal motor function. Plays a role in the reorganization of the cortical actin cytoskeleton and the formation of actin veil structures in neuronal growth cones via its interaction with HAX1 and the Arp2/3 complex. This is Voltage-gated potassium channel KCNC3 from Rattus norvegicus (Rat).